The chain runs to 229 residues: Urease accessory protein UreF (229 aa).

The protein belongs to the UreF family. UreD, UreF and UreG form a complex that acts as a GTP-hydrolysis-dependent molecular chaperone, activating the urease apoprotein by helping to assemble the nickel containing metallocenter of UreC. The UreE protein probably delivers the nickel.

It localises to the cytoplasm. Functionally, required for maturation of urease via the functional incorporation of the urease nickel metallocenter. The sequence is that of Urease accessory protein UreF from Staphylococcus epidermidis (strain ATCC 35984 / DSM 28319 / BCRC 17069 / CCUG 31568 / BM 3577 / RP62A).